We begin with the raw amino-acid sequence, 270 residues long: Interleukin-33 (270 aa).

Residues 1 to 65 (MKPKMKYSTN…EACYFRRETT (65 aa)) are homeodomain-like HTH domain. A propeptide spanning residues 1–94 (MKPKMKYSTN…CQQQSTVESF (94 aa)) is cleaved from the precursor. The tract at residues 64–111 (TTKRPSLKTDRKHKRHLVLAACQQQSTVESFAFGISGVQKYTRALHDS) is interaction with RELA.

Belongs to the IL-1 family. Highly divergent. In terms of assembly, forms a 1:1:1 heterotrimeric complex with its primary high-affinity receptor IL1RL1 and the coreceptor IL1RAP. Interacts with cargo receptor TMED10; the interaction mediates the translocation from the cytoplasm into the ERGIC (endoplasmic reticulum-Golgi intermediate compartment) and thereby secretion. In terms of processing, the full-length protein can be released from cells and is able to signal via the IL1RL1/ST2 receptor. However, proteolytic processing by CELA1, CSTG/cathepsin G and ELANE/neutrophil elastase produces C-terminal peptides that are more active than the unprocessed full-length protein. May also be proteolytically processed by calpains. Proteolytic cleavage mediated by apoptotic caspases including CASP3 and CASP7 results in IL33 inactivation. In vitro proteolytic cleavage by CASP1 was reported but could not be confirmed in vivo suggesting that IL33 is probably not a direct substrate for that caspase.

It is found in the nucleus. The protein localises to the chromosome. The protein resides in the cytoplasm. It localises to the cytoplasmic vesicle. Its subcellular location is the secretory vesicle. It is found in the secreted. In terms of biological role, cytokine that binds to and signals through the IL1RL1/ST2 receptor which in turn activates NF-kappa-B and MAPK signaling pathways in target cells. Involved in the maturation of Th2 cells inducing the secretion of T-helper type 2-associated cytokines. Also involved in activation of mast cells, basophils, eosinophils and natural killer cells. Acts as a chemoattractant for Th2 cells, and may function as an 'alarmin', that amplifies immune responses during tissue injury. Induces rapid UCP2-dependent mitochondrial rewiring that attenuates the generation of reactive oxygen species and preserves the integrity of Krebs cycle required for persistent production of itaconate and subsequent GATA3-dependent differentiation of inflammation-resolving alternatively activated macrophages. Its function is as follows. In quiescent endothelia the uncleaved form is constitutively and abundantly expressed, and acts as a chromatin-associated nuclear factor with transcriptional repressor properties, it may sequester nuclear NF-kappaB/RELA, lowering expression of its targets. This form is rapidely lost upon angiogenic or pro-inflammatory activation. In Pongo abelii (Sumatran orangutan), this protein is Interleukin-33 (IL33).